The primary structure comprises 189 residues: uncharacterized protein (189 aa).

The 61-residue stretch at 2–62 folds into the HTH tetR-type domain; the sequence is RPTNKRILDA…ALLSQHSSNR (61 aa). The H-T-H motif DNA-binding region spans 25-44; it reads TTKEIAEKANVSEATIFRNF.

This is an uncharacterized protein from Bacillus subtilis (strain 168).